Reading from the N-terminus, the 401-residue chain is Cytochrome P450 BJ-1 (401 aa).

Residue C350 coordinates heme.

Belongs to the cytochrome P450 family. Requires heme as cofactor.

Functionally, cytochromes P450 are a group of heme-thiolate monooxygenases. They oxidize a variety of structurally unrelated compounds, including steroids, fatty acids, and xenobiotics. The protein is Cytochrome P450 BJ-1 (cyp112) of Bradyrhizobium diazoefficiens (strain JCM 10833 / BCRC 13528 / IAM 13628 / NBRC 14792 / USDA 110).